The primary structure comprises 143 residues: Cofilin (143 aa).

Residues 5–137 form the ADF-H domain; it reads GVAVADESLN…AYESVLEKVS (133 aa).

It belongs to the actin-binding proteins ADF family.

It is found in the cytoplasm. The protein resides in the cytoskeleton. It localises to the nucleus matrix. In terms of biological role, controls reversibly actin polymerization and depolymerization in a pH-sensitive manner. It has the ability to bind G- and F-actin in a 1:1 ratio of cofilin to actin. Binding to F-actin is regulated by tropomyosin. It is the major component of intranuclear and cytoplasmic actin rods. Required for accumulation of actin at the cell division site via depolymerizing actin at the cell ends. In association with myosin II has a role in the assembly of the contractile ring via severing actin filaments. Involved in the maintenance of the contractile ring once formed. In association with profilin and capping protein, has a role in the mitotic reorganization of the actin cytoskeleton. The polypeptide is Cofilin (COF1) (Kluyveromyces lactis (strain ATCC 8585 / CBS 2359 / DSM 70799 / NBRC 1267 / NRRL Y-1140 / WM37) (Yeast)).